A 203-amino-acid polypeptide reads, in one-letter code: LexA repressor (203 aa).

Residues 30–50 constitute a DNA-binding region (H-T-H motif); the sequence is VREICQAVSLKSTSTVHGHLK. Catalysis depends on for autocatalytic cleavage activity residues Ser-127 and Lys-164.

This sequence belongs to the peptidase S24 family. Homodimer.

The catalysed reaction is Hydrolysis of Ala-|-Gly bond in repressor LexA.. In terms of biological role, represses a number of genes involved in the response to DNA damage (SOS response), including recA and lexA. In the presence of single-stranded DNA, RecA interacts with LexA causing an autocatalytic cleavage which disrupts the DNA-binding part of LexA, leading to derepression of the SOS regulon and eventually DNA repair. The chain is LexA repressor from Clostridium perfringens (strain SM101 / Type A).